We begin with the raw amino-acid sequence, 162 residues long: NADH-quinone oxidoreductase subunit I (162 aa).

2 consecutive 4Fe-4S ferredoxin-type domains span residues 53–83 (QRRYANGEERCIACKLCEAVCPAMAISIESE) and 93–122 (SRYDIDLTKCIFCGFCEEACPVDAIVETHI). Residues Cys63, Cys66, Cys69, Cys73, Cys102, Cys105, Cys108, and Cys112 each contribute to the [4Fe-4S] cluster site.

The protein belongs to the complex I 23 kDa subunit family. In terms of assembly, NDH-1 is composed of 14 different subunits. Subunits NuoA, H, J, K, L, M, N constitute the membrane sector of the complex. [4Fe-4S] cluster serves as cofactor.

It is found in the cell inner membrane. It catalyses the reaction a quinone + NADH + 5 H(+)(in) = a quinol + NAD(+) + 4 H(+)(out). Functionally, NDH-1 shuttles electrons from NADH, via FMN and iron-sulfur (Fe-S) centers, to quinones in the respiratory chain. The immediate electron acceptor for the enzyme in this species is believed to be ubiquinone. Couples the redox reaction to proton translocation (for every two electrons transferred, four hydrogen ions are translocated across the cytoplasmic membrane), and thus conserves the redox energy in a proton gradient. This is NADH-quinone oxidoreductase subunit I from Chromobacterium violaceum (strain ATCC 12472 / DSM 30191 / JCM 1249 / CCUG 213 / NBRC 12614 / NCIMB 9131 / NCTC 9757 / MK).